The sequence spans 204 residues: Ribonuclease HII (204 aa).

Residues 1–197 (MILGIDEAGR…KNRILNPKLL (197 aa)) enclose the RNase H type-2 domain. Residues D6, E7, and D103 each coordinate a divalent metal cation.

This sequence belongs to the RNase HII family. It depends on Mn(2+) as a cofactor. Mg(2+) is required as a cofactor.

The protein resides in the cytoplasm. The catalysed reaction is Endonucleolytic cleavage to 5'-phosphomonoester.. In terms of biological role, endonuclease that specifically degrades the RNA of RNA-DNA hybrids. This is Ribonuclease HII from Helicobacter pylori (strain Shi470).